A 95-amino-acid polypeptide reads, in one-letter code: Protein GOLVEN 9 (95 aa).

An N-terminal signal peptide occupies residues 1-24 (MKKTSLKLMTLVLGFCFVIYLLQG). A propeptide spanning residues 25 to 73 (PRGGSRNGDLLIARKLISLEPIETKNAARSLKDSISTDLEEEVDRLMEH) is cleaved from the precursor. The tract at residues 72 to 95 (EHEYPSPVKPRKRTPVHNGVRNRH) is disordered. A Sulfotyrosine modification is found at tyrosine 75. Over residues 80–95 (KPRKRTPVHNGVRNRH) the composition is skewed to basic residues. Position 86 is a hydroxyproline (proline 86). A propeptide spanning residues 90 to 95 (GVRNRH) is cleaved from the precursor.

The protein belongs to the RGF family. In terms of assembly, binds to LRR receptor-like serine/threonine-protein kinases to trigger their dimerization with SERK proteins and subsequent signaling. As to expression, expressed in roots.

It is found in the secreted. Functionally, signaling peptide (root growth factor) required during root gravitropism in a PIN2-traffic dependent manner. Regulates the pattern of root growth and lateral root development by modulating the length and the number of cortical cells in the root apical meristem (RAM), and the anticlinal asymmetric cell divisions in lateral root initiation cells. The polypeptide is Protein GOLVEN 9 (Arabidopsis thaliana (Mouse-ear cress)).